Here is a 760-residue protein sequence, read N- to C-terminus: Histone-lysine N-methyltransferase EZH2 (760 aa).

2 disordered regions span residues 208–231 (KDDAEDHKEQLSSESHNNDGSKKF) and 356–444 (PERA…PENV). Positions 361–373 (TPSKRSTGRRRGR) are enriched in basic residues. Residues 375-388 (PNSNSRPSTPTVNS) show a composition bias toward polar residues. The span at 389–400 (ETKDTDSDREGG) shows a compositional bias: basic and acidic residues. Positions 517–619 (CRKIQLKKDG…SKNVSCKNCS (103 aa)) constitute a CXC domain. The SET domain occupies 626–741 (KHLLLAPSDV…TGEELFFDYR (116 aa)).

The protein belongs to the class V-like SAM-binding methyltransferase superfamily. Histone-lysine methyltransferase family. EZ subfamily. Component of the prc2/eed-ezh2 complex.

It is found in the nucleus. The catalysed reaction is L-lysyl(27)-[histone H3] + 3 S-adenosyl-L-methionine = N(6),N(6),N(6)-trimethyl-L-lysyl(27)-[histone H3] + 3 S-adenosyl-L-homocysteine + 3 H(+). In terms of biological role, polycomb group (PcG) protein. Catalytic subunit of the prc2/eed-ezh2 complex, which methylates 'Lys-9' and 'Lys-27' of histone H3, leading to transcriptional repression of the affected target gene. May regulate the circadian clock via histone methylation at the promoter of the circadian genes. The polypeptide is Histone-lysine N-methyltransferase EZH2 (ezh2) (Danio rerio (Zebrafish)).